The following is a 178-amino-acid chain: Translation initiation factor IF-3 (178 aa).

The segment at 1–20 (MRRPFKTDAPVKDGPRSNRE) is disordered.

Belongs to the IF-3 family. As to quaternary structure, monomer.

It is found in the cytoplasm. Functionally, IF-3 binds to the 30S ribosomal subunit and shifts the equilibrium between 70S ribosomes and their 50S and 30S subunits in favor of the free subunits, thus enhancing the availability of 30S subunits on which protein synthesis initiation begins. The chain is Translation initiation factor IF-3 from Rhizobium leguminosarum bv. trifolii (strain WSM2304).